The chain runs to 182 residues: Ribosome-recycling factor (182 aa).

It belongs to the RRF family.

The protein resides in the cytoplasm. In terms of biological role, responsible for the release of ribosomes from messenger RNA at the termination of protein biosynthesis. May increase the efficiency of translation by recycling ribosomes from one round of translation to another. The polypeptide is Ribosome-recycling factor (Prochlorococcus marinus subsp. pastoris (strain CCMP1986 / NIES-2087 / MED4)).